Here is a 712-residue protein sequence, read N- to C-terminus: Lactoperoxidase (712 aa).

Residues 1 to 26 (MRVLLHLPALLASLILLQAAASTTRA) form the signal peptide. Positions 27–80 (QTTRTSAISDTVSQAKVQVNKAFLDSRTRLKTAMSSETPTSRQLSEYLKHAKGR) are excised as a propeptide. An N-linked (GlcNAc...) asparagine glycan is attached at Asn106. Cysteines 132 and 145 form a disulfide. N-linked (GlcNAc...) asparagine glycosylation is present at Asn212. Asp225 is a binding site for heme b. Catalysis depends on His226, which acts as the Proton acceptor. Position 227 (Asp227) interacts with Ca(2+). 2 disulfides stabilise this stretch: Cys246/Cys256 and Cys250/Cys274. Thr301, Phe303, Asp305, and Ser307 together coordinate Ca(2+). Ser315 is modified (phosphoserine). 2 N-linked (GlcNAc...) asparagine glycosylation sites follow: Asn322 and Asn358. Residues Cys354 and Cys365 are joined by a disulfide bond. Glu375 and His468 together coordinate heme b. Position 482 is a 3'-nitrotyrosine (Tyr482). Cystine bridges form between Cys573–Cys630 and Cys671–Cys696.

It belongs to the peroxidase family. XPO subfamily. The cofactor is Ca(2+). Heme b is required as a cofactor. Mammary gland, milk and salivary gland. Found in bronchial submucosal glands.

It is found in the secreted. Its subcellular location is the cytoplasm. The catalysed reaction is 2 a phenolic donor + H2O2 = 2 a phenolic radical donor + 2 H2O. The enzyme catalyses thiocyanate + H2O2 + H(+) = hypothiocyanous acid + H2O. It catalyses the reaction iodide + H2O2 = hypoiodite + H2O. In terms of biological role, heme-containing oxidoreductase which catalyzes the conversion of thiocyanate (SCN(-)) into antimicrobial agent hypothiocyanous acid (OSCN(-)) in the presence of hydrogen peroxide (H2O2). Also involved in the conversion of iodide (I(-)) into hypoiodite (IO(-)) in the presence of H2O2. Responsible for the inactivation of a wide range of micro-organisms and hence, important component of defense mechanism. Shows antibacterial properties against Pseudomonas aeruginosa. The lactoperoxidase-SCN(-)-H2O2 system shows antibacterial properties against Burkholderia cepacia and Haemophilus influenzae in vitro. Present in mammary and salivary gland secretions and may contribute to airway host defense against infection. May contribute to maintaining an appropriate H2O2 cellular level, therefore protecting cells from H2O2-caused injuries and inflammation. This chain is Lactoperoxidase, found in Homo sapiens (Human).